Reading from the N-terminus, the 152-residue chain is UPF0178 protein YaiI (152 aa).

It belongs to the UPF0178 family.

This Escherichia coli O6:K15:H31 (strain 536 / UPEC) protein is UPF0178 protein YaiI.